A 475-amino-acid chain; its full sequence is Ribulose bisphosphate carboxylase large chain (475 aa).

A propeptide spanning residues Met-1–Ser-2 is cleaved from the precursor. The residue at position 3 (Pro-3) is an N-acetylproline. Lys-14 carries the post-translational modification N6,N6,N6-trimethyllysine. Asn-123 and Thr-173 together coordinate substrate. Catalysis depends on Lys-175, which acts as the Proton acceptor. Lys-177 is a substrate binding site. Mg(2+) is bound by residues Lys-201, Asp-203, and Glu-204. N6-carboxylysine is present on Lys-201. The active-site Proton acceptor is the His-294. Substrate-binding residues include Arg-295, His-327, and Ser-379.

Belongs to the RuBisCO large chain family. Type I subfamily. In terms of assembly, heterohexadecamer of 8 large chains and 8 small chains; disulfide-linked. The disulfide link is formed within the large subunit homodimers. It depends on Mg(2+) as a cofactor. Post-translationally, the disulfide bond which can form in the large chain dimeric partners within the hexadecamer appears to be associated with oxidative stress and protein turnover.

Its subcellular location is the plastid. It localises to the chloroplast. The enzyme catalyses 2 (2R)-3-phosphoglycerate + 2 H(+) = D-ribulose 1,5-bisphosphate + CO2 + H2O. The catalysed reaction is D-ribulose 1,5-bisphosphate + O2 = 2-phosphoglycolate + (2R)-3-phosphoglycerate + 2 H(+). Functionally, ruBisCO catalyzes two reactions: the carboxylation of D-ribulose 1,5-bisphosphate, the primary event in carbon dioxide fixation, as well as the oxidative fragmentation of the pentose substrate in the photorespiration process. Both reactions occur simultaneously and in competition at the same active site. This Pinus longaeva (Great Basin bristlecone pine) protein is Ribulose bisphosphate carboxylase large chain.